We begin with the raw amino-acid sequence, 368 residues long: G-protein coupled receptor 62 (368 aa).

Residues 1–18 are Extracellular-facing; it reads MANSTGLNASEVAGSLGL. N-linked (GlcNAc...) asparagine glycans are attached at residues Asn3 and Asn8. Residues 19-39 traverse the membrane as a helical segment; it reads ILAAVVEVGALLGNGALLVVV. Topologically, residues 40–53 are cytoplasmic; sequence LRTPGLRDALYLAH. The helical transmembrane segment at 54–74 threads the bilayer; sequence LCVVDLLAAASIMPLGLLAAP. Residues 75–91 lie on the Extracellular side of the membrane; the sequence is PPGLGRVRLGPAPCRAA. The chain crosses the membrane as a helical span at residues 92–112; that stretch reads RFLSAALLPACTLGVAALGLA. The Cytoplasmic portion of the chain corresponds to 113-129; sequence RYRLIVHPLRPGSRPPP. A helical transmembrane segment spans residues 130-150; the sequence is VLVLTAVWAAAGLLGALSLLG. At 151-177 the chain is on the extracellular side; that stretch reads TPPAPPPAPARCSVLAGGLGPFRPLWA. The chain crosses the membrane as a helical span at residues 178 to 198; that stretch reads LLAFALPALLLLGAYGGIFVV. At 199–239 the chain is on the cytoplasmic side; it reads ARRAALRPPRPARGSRLHSDSLDSRLSILPPLRPRLPGGKA. A helical membrane pass occupies residues 240–260; that stretch reads ALAPALAVGQFAACWLPYGCA. Over 261–272 the chain is Extracellular; it reads CLAPAARAAEAE. The chain crosses the membrane as a helical span at residues 273–293; that stretch reads AAVTWVAYSAFAAHPFLYGLL. The Cytoplasmic portion of the chain corresponds to 294–368; it reads QRPVRLALGR…YQGPPESSLS (75 aa). The disordered stretch occupies residues 332 to 368; the sequence is RPPEGPAVGPSEAPEQTPELAGGRSPAYQGPPESSLS.

It belongs to the G-protein coupled receptor 1 family. In terms of assembly, homodimers. Forms heterodimer with MTNR1B. Interacts with ARRB1 and ARRB2 in a spontaneous and agonist-independent manner; leading to the internalization of GPR62 in the endosomal compartment. In terms of tissue distribution, expressed in brain; detected in the basal forebrain, frontal cortex, caudate, putamen, thalamus and hippocampus.

It is found in the cell membrane. Its subcellular location is the endosome membrane. In terms of biological role, orphan G-protein coupled receptor. Constitutively activates the G(q/11)/inositol phosphate and the G(s)-alpha/cAMP signaling pathways. Has spontaneous activity for beta-arrestin recruitment. Shows a reciprocal modulation of signaling functions with the melatonin receptor MTNR1B most likely through receptor heteromerization. This chain is G-protein coupled receptor 62 (GPR62), found in Homo sapiens (Human).